Here is a 625-residue protein sequence, read N- to C-terminus: Chaperone protein HtpG (625 aa).

Residues 1 to 337 form an a; substrate-binding region; sequence MNIQKKEVYS…SNNLPLNVSR (337 aa). A b region spans residues 338-552; it reads EILQDNSITQ…SNEMSTQMAK (215 aa). The tract at residues 553-625 is c; the sequence is LFSAAGQSVP…ARTNKLILEQ (73 aa).

Belongs to the heat shock protein 90 family. Homodimer.

It localises to the cytoplasm. Molecular chaperone. Has ATPase activity. This is Chaperone protein HtpG from Buchnera aphidicola subsp. Schizaphis graminum (strain Sg).